The sequence spans 299 residues: MTEMPGWKHVYSGKVRDLFVPETAEGLTETDTVLVVASDRVSAFDHVLEPGIPGKGELLTALSLWWFDRLDAPNHLIPDHTLEGERARERIPAAVSGRSMLVKPLDMFPIECVVRGYLTGSGWQEYQESQSVCGLPLPAGLSDGDRLPEPIYTPAWKAPLGEHDENISYERTIELVGAETAGTLRELSLAVYGRGAAIAEKRGVIIADTKFEFGAERETGEITLADEVLTSDSSRYWDAAATSDVYTPKERMASFDKQIVRDWLAANWDRTGTPPALPAEIVERTAGRYRALVERLTGA.

The protein belongs to the SAICAR synthetase family.

The catalysed reaction is 5-amino-1-(5-phospho-D-ribosyl)imidazole-4-carboxylate + L-aspartate + ATP = (2S)-2-[5-amino-1-(5-phospho-beta-D-ribosyl)imidazole-4-carboxamido]succinate + ADP + phosphate + 2 H(+). It participates in purine metabolism; IMP biosynthesis via de novo pathway; 5-amino-1-(5-phospho-D-ribosyl)imidazole-4-carboxamide from 5-amino-1-(5-phospho-D-ribosyl)imidazole-4-carboxylate: step 1/2. The sequence is that of Phosphoribosylaminoimidazole-succinocarboxamide synthase from Leifsonia xyli subsp. xyli (strain CTCB07).